A 77-amino-acid chain; its full sequence is Conotoxin ArMSGL-0143 (77 aa).

Positions 1-22 (MSGLGIMLLTLLLLVFMETSHQ) are cleaved as a signal peptide. The propeptide occupies 23–44 (DAGEKQATQRDAINVRRRRSLT). 3 disulfides stabilise this stretch: Cys51–Cys63, Cys55–Cys71, and Cys62–Cys75. Residue Phe76 is modified to Phenylalanine amide.

Belongs to the conotoxin O3 superfamily. As to expression, expressed by the venom duct.

It localises to the secreted. This Conus arenatus (Sand-dusted cone) protein is Conotoxin ArMSGL-0143.